The primary structure comprises 423 residues: Gamma-glutamyl phosphate reductase (423 aa).

The segment covering 1 to 14 (MTLQAAPRSAAAQQ) has biased composition (low complexity). Residues 1–25 (MTLQAAPRSAAAQQREPDLRQEVHD) are disordered. Basic and acidic residues predominate over residues 15–25 (REPDLRQEVHD).

This sequence belongs to the gamma-glutamyl phosphate reductase family.

It localises to the cytoplasm. The catalysed reaction is L-glutamate 5-semialdehyde + phosphate + NADP(+) = L-glutamyl 5-phosphate + NADPH + H(+). Its pathway is amino-acid biosynthesis; L-proline biosynthesis; L-glutamate 5-semialdehyde from L-glutamate: step 2/2. In terms of biological role, catalyzes the NADPH-dependent reduction of L-glutamate 5-phosphate into L-glutamate 5-semialdehyde and phosphate. The product spontaneously undergoes cyclization to form 1-pyrroline-5-carboxylate. The sequence is that of Gamma-glutamyl phosphate reductase from Mycobacterium ulcerans (strain Agy99).